The chain runs to 189 residues: Inner membrane-spanning protein YciB (189 aa).

5 helical membrane passes run 3–23, 47–67, 76–96, 121–141, and 149–169; these read LLID…WGIY, IEPM…ATLL, WKPT…QLFF, WSWT…AHAF, and FKLF…ALYL.

It belongs to the YciB family.

It is found in the cell inner membrane. Its function is as follows. Plays a role in cell envelope biogenesis, maintenance of cell envelope integrity and membrane homeostasis. This Paracidovorax citrulli (strain AAC00-1) (Acidovorax citrulli) protein is Inner membrane-spanning protein YciB.